A 508-amino-acid polypeptide reads, in one-letter code: Monocarboxylate transporter 9 (508 aa).

6 helical membrane passes run 13–33 (WVIV…PLAV), 53–73 (WVGS…SLFV), 80–100 (PVTI…SLAP), 102–122 (IYFL…LLYT), 137–157 (GLAL…YAAL), and 164–184 (FYGL…ILAC). Positions 242–263 (GDWGRETSLPKNPTGAAHTKEP) are disordered. Transmembrane regions (helical) follow at residues 303 to 323 (VFSA…PPSL), 341 to 361 (IPLI…LGIL), 370 to 390 (LYLY…IPLA), 396 to 416 (LAIL…FPYV), 431 to 451 (GILM…VGWF), and 460 to 480 (IAFY…LLAI).

It belongs to the major facilitator superfamily. Monocarboxylate porter (TC 2.A.1.13) family. In terms of tissue distribution, expressed in the liver and kidneys. In the liver localizes on the sinusoidal membrane of the hepatocytes.

The protein resides in the cell membrane. The enzyme catalyses creatine(in) = creatine(out). The catalysed reaction is (R)-carnitine(in) = (R)-carnitine(out). Its function is as follows. Extracellular pH-and Na(+)-sensitive low-affinity creatine transporter. Also functions as a pH-independent carnitine efflux transporter. This chain is Monocarboxylate transporter 9 (Slc16a9), found in Rattus norvegicus (Rat).